A 251-amino-acid chain; its full sequence is 5-oxoprolinase subunit A 3 (251 aa).

The protein belongs to the LamB/PxpA family. In terms of assembly, forms a complex composed of PxpA, PxpB and PxpC.

It catalyses the reaction 5-oxo-L-proline + ATP + 2 H2O = L-glutamate + ADP + phosphate + H(+). In terms of biological role, catalyzes the cleavage of 5-oxoproline to form L-glutamate coupled to the hydrolysis of ATP to ADP and inorganic phosphate. This chain is 5-oxoprolinase subunit A 3, found in Pseudomonas aeruginosa (strain ATCC 15692 / DSM 22644 / CIP 104116 / JCM 14847 / LMG 12228 / 1C / PRS 101 / PAO1).